Here is a 176-residue protein sequence, read N- to C-terminus: Protein FimF (176 aa).

The N-terminal stretch at 1–20 (MRNKPFYLLCAFLWLAVSHA) is a signal peptide. An intrachain disulfide couples cysteine 38 to cysteine 78.

It belongs to the fimbrial protein family.

The protein localises to the fimbrium. Its function is as follows. Involved in regulation of length and mediation of adhesion of type 1 fimbriae (but not necessary for the production of fimbriae). Involved in the integration of FimH in the fimbriae. The chain is Protein FimF (fimF) from Escherichia coli (strain K12).